A 271-amino-acid polypeptide reads, in one-letter code: UPF0758 protein ACIAD3126 (271 aa).

An MPN domain is found at 120 to 242; the sequence is NLNSSRLVLD…TFSFAERALL (123 aa). Histidine 191, histidine 193, and aspartate 204 together coordinate Zn(2+). Residues 191–204 carry the JAMM motif motif; it reads HNHPFGKAEPSAAD.

Belongs to the UPF0758 family.

The polypeptide is UPF0758 protein ACIAD3126 (Acinetobacter baylyi (strain ATCC 33305 / BD413 / ADP1)).